A 133-amino-acid chain; its full sequence is Secreted effector protein SteB (133 aa).

It is found in the secreted. Its subcellular location is the host cytoplasm. In terms of biological role, effector proteins function to alter host cell physiology and promote bacterial survival in host tissues. In Salmonella typhimurium (strain 14028s / SGSC 2262), this protein is Secreted effector protein SteB (steB).